The chain runs to 196 residues: Phosphoheptose isomerase (196 aa).

Residues 35 to 194 (LTACLRCGGK…EKELFTPSGQ (160 aa)) enclose the SIS domain. Residue 50–52 (NGG) participates in substrate binding. Residues His-59 and Glu-63 each contribute to the Zn(2+) site. Residues Glu-63, 92–93 (ND), 118–120 (STS), Ser-123, and Gln-170 each bind substrate. 2 residues coordinate Zn(2+): Gln-170 and His-178.

It belongs to the SIS family. GmhA subfamily. As to quaternary structure, homotetramer. Zn(2+) is required as a cofactor.

It localises to the cytoplasm. The catalysed reaction is 2 D-sedoheptulose 7-phosphate = D-glycero-alpha-D-manno-heptose 7-phosphate + D-glycero-beta-D-manno-heptose 7-phosphate. It participates in carbohydrate biosynthesis; D-glycero-D-manno-heptose 7-phosphate biosynthesis; D-glycero-alpha-D-manno-heptose 7-phosphate and D-glycero-beta-D-manno-heptose 7-phosphate from sedoheptulose 7-phosphate: step 1/1. Functionally, catalyzes the isomerization of sedoheptulose 7-phosphate in D-glycero-D-manno-heptose 7-phosphate. The chain is Phosphoheptose isomerase from Syntrophotalea carbinolica (strain DSM 2380 / NBRC 103641 / GraBd1) (Pelobacter carbinolicus).